The chain runs to 292 residues: Ribosomal protein L11 methyltransferase (292 aa).

4 residues coordinate S-adenosyl-L-methionine: threonine 143, glycine 164, aspartate 186, and asparagine 227.

It belongs to the methyltransferase superfamily. PrmA family.

It is found in the cytoplasm. It carries out the reaction L-lysyl-[protein] + 3 S-adenosyl-L-methionine = N(6),N(6),N(6)-trimethyl-L-lysyl-[protein] + 3 S-adenosyl-L-homocysteine + 3 H(+). Methylates ribosomal protein L11. The protein is Ribosomal protein L11 methyltransferase of Hahella chejuensis (strain KCTC 2396).